The chain runs to 336 residues: Adenylate isopentenyltransferase 3, chloroplastic (336 aa).

The transit peptide at 1–55 directs the protein to the chloroplast; sequence MIMKISMAMCKQPLPPSPTLDFPPARFGPNMLTLNPYGPKDKVVVIMGATGTGKS. 48–55 serves as a coordination point for ATP; sequence GATGTGKS. At cysteine 333 the chain carries Cysteine methyl ester. A lipid anchor (S-farnesyl cysteine) is attached at cysteine 333. The propeptide at 334–336 is removed in mature form; that stretch reads LVA.

It belongs to the IPP transferase family. Farnesylated. In terms of tissue distribution, expressed the phloem companion cells.

It localises to the plastid. The protein localises to the chloroplast. Its subcellular location is the nucleus membrane. The protein resides in the cytoplasm. It catalyses the reaction dimethylallyl diphosphate + ADP = N(6)-(dimethylallyl)adenosine 5'-diphosphate + diphosphate. It carries out the reaction dimethylallyl diphosphate + ATP = N(6)-(dimethylallyl)adenosine 5'-triphosphate + diphosphate. Functionally, involved in cytokinin biosynthesis. Catalyzes the transfer of an isopentenyl group from dimethylallyl diphosphate (DMAPP) to ATP and ADP. The chain is Adenylate isopentenyltransferase 3, chloroplastic (IPT3) from Arabidopsis thaliana (Mouse-ear cress).